Consider the following 94-residue polypeptide: Large ribosomal subunit protein bL27 (94 aa).

Positions 1-10 are excised as a propeptide; that stretch reads MQFLFNIQLF.

It belongs to the bacterial ribosomal protein bL27 family. Post-translationally, the N-terminus is cleaved by ribosomal processing cysteine protease Prp.

This chain is Large ribosomal subunit protein bL27, found in Fusobacterium nucleatum subsp. nucleatum (strain ATCC 25586 / DSM 15643 / BCRC 10681 / CIP 101130 / JCM 8532 / KCTC 2640 / LMG 13131 / VPI 4355).